The primary structure comprises 69 residues: Beta-defensin 43 (69 aa).

Positions 1–22 (MRVLFSILGVLTLLSIVPLARS) are cleaved as a signal peptide. Cystine bridges form between Cys29–Cys56 and Cys35–Cys49.

It belongs to the beta-defensin family.

It localises to the secreted. Functionally, has bactericidal activity. This chain is Beta-defensin 43 (Defb43), found in Mus musculus (Mouse).